The following is a 400-amino-acid chain: Formate-dependent phosphoribosylglycinamide formyltransferase (400 aa).

Residues 22 to 23 (EL) and Glu82 each bind N(1)-(5-phospho-beta-D-ribosyl)glycinamide. ATP contacts are provided by residues Arg115, Lys157, 162-167 (SSGKGQ), 197-200 (EGFV), and Glu205. The ATP-grasp domain occupies 120 to 315 (RLAAETLGLP…EFELHARAIL (196 aa)). Residues Glu274 and Glu286 each contribute to the Mg(2+) site. N(1)-(5-phospho-beta-D-ribosyl)glycinamide-binding positions include Asp293, Lys362, and 369 to 370 (RR).

Belongs to the PurK/PurT family. Homodimer.

The enzyme catalyses N(1)-(5-phospho-beta-D-ribosyl)glycinamide + formate + ATP = N(2)-formyl-N(1)-(5-phospho-beta-D-ribosyl)glycinamide + ADP + phosphate + H(+). Its pathway is purine metabolism; IMP biosynthesis via de novo pathway; N(2)-formyl-N(1)-(5-phospho-D-ribosyl)glycinamide from N(1)-(5-phospho-D-ribosyl)glycinamide (formate route): step 1/1. Functionally, involved in the de novo purine biosynthesis. Catalyzes the transfer of formate to 5-phospho-ribosyl-glycinamide (GAR), producing 5-phospho-ribosyl-N-formylglycinamide (FGAR). Formate is provided by PurU via hydrolysis of 10-formyl-tetrahydrofolate. This is Formate-dependent phosphoribosylglycinamide formyltransferase from Mycolicibacterium vanbaalenii (strain DSM 7251 / JCM 13017 / BCRC 16820 / KCTC 9966 / NRRL B-24157 / PYR-1) (Mycobacterium vanbaalenii).